Reading from the N-terminus, the 309-residue chain is Protein RTM1 (309 aa).

Transmembrane regions (helical) follow at residues 22-42 (AIALTVLFIVTTLIYSLQVVW), 83-103 (TFSAFIPLFFGCIMEIVGYIA), 119-139 (IQAVLLLIAPALYAATIYMLF), 162-182 (FFVFGDVVSFCLQAAGGGLMA), 193-213 (LITAGLVIQIVFFGVFIINEF), 233-253 (WWFLNLTLMLSSILIMVRSIV), and 278-298 (AVPMLLAAIVFIVGSFFGNIF).

It belongs to the lipid-translocating exporter (LTE) (TC 9.A.26.1) family.

It is found in the membrane. In terms of biological role, confers resistance to molasses (to a particular toxic element present in some molasses). This chain is Protein RTM1 (RTM1), found in Saccharomyces cerevisiae (Baker's yeast).